The following is a 219-amino-acid chain: Leukocyte surface antigen CD53 (219 aa).

At 1-11 the chain is on the cytoplasmic side; it reads MGMSSLKLLKY. A helical membrane pass occupies residues 12-32; sequence VLFFFNLLFWICGCCILGFGI. Residues 33–54 are Extracellular-facing; that stretch reads YLLIHNNFGVLFHNLPSLTLGN. Residues 55–69 form a helical membrane-spanning segment; that stretch reads VFVIVGSIIMVVAFL. The Cytoplasmic segment spans residues 70-80; that stretch reads GCMGSIKENKC. The helical transmembrane segment at 81–106 threads the bilayer; sequence LLMSFFILLLIILLAEVTLAILLFVY. Over 107-181 the chain is Extracellular; sequence EQKLNEYVAK…AKARLWFHSN (75 aa). N-linked (GlcNAc...) asparagine glycosylation is found at N129 and N148. The chain crosses the membrane as a helical span at residues 182–206; sequence FLYIGIITICVCVIEVLGMSFALTL. The Cytoplasmic portion of the chain corresponds to 207–219; it reads NCQIDKTSQTIGL.

Belongs to the tetraspanin (TM4SF) family. Interacts with SCIMP. Interacts with CD45/PTPRC. Interacts with IL7R. Interacts with RBL2 and PPP2CA. B-cells, monocytes, macrophages, neutrophils, single (CD4 or CD8) positive thymocytes and peripheral T-cells.

It is found in the cell membrane. The protein localises to the cell junction. The protein resides in the membrane. Its subcellular location is the synapse. Its function is as follows. Structural component of specialized membrane microdomains known as tetraspanin-enriched microdomains (TERMs), which act as platforms for receptor clustering and signaling. Participates thereby in diverse biological functions such as cell signal transduction, adhesion, migration and protein trafficking. Plays a role in the activation of monocytes and B-cells. Acts as an essential regulator of B-cell development by promoting interleukin-7 receptor/IL7R signaling. Also promotes, in B-cells, the BCR signaling by recruiting PKC to the plasma membrane in order to phosphorylate its substrates. Plays an essential role in B- and T-cells homing to lymph nodes by stabilizing L-selectin/SELL cell surface expression. Also mediates metabolic and inflammatory functions in hepatocytes and adipose tissue by promoting TNF-alpha and LPS signaling independent of the immune compartment. The protein is Leukocyte surface antigen CD53 (CD53) of Homo sapiens (Human).